Consider the following 111-residue polypeptide: uncharacterized protein (111 aa).

2 consecutive transmembrane segments (helical) span residues 18-38 (LNVFLFFLGFLLPLFLGLFVS) and 42-62 (LALALSSGWFIMDLILFRTFP).

It is found in the membrane. This is an uncharacterized protein from Saccharomyces cerevisiae (strain ATCC 204508 / S288c) (Baker's yeast).